A 153-amino-acid chain; its full sequence is MKMRVLWVGKTQEEWVRRGIDEYAGRIRRYTPLELAEAKEEKGAAAEAMREREGERLVKLLPRNARLILLDERGEQLSSPDLAGFIAANRDGGVQELAFAIGGAYGFSDSFRSMAYKTIALSRMTFTHQMVRIFLLEQIYRGFTIINGEPYHH.

Residues Leu70, Gly102, and 121–126 contribute to the S-adenosyl-L-methionine site; that span reads LSRMTF.

This sequence belongs to the RNA methyltransferase RlmH family. In terms of assembly, homodimer.

The protein resides in the cytoplasm. The catalysed reaction is pseudouridine(1915) in 23S rRNA + S-adenosyl-L-methionine = N(3)-methylpseudouridine(1915) in 23S rRNA + S-adenosyl-L-homocysteine + H(+). In terms of biological role, specifically methylates the pseudouridine at position 1915 (m3Psi1915) in 23S rRNA. The protein is Ribosomal RNA large subunit methyltransferase H of Geotalea uraniireducens (strain Rf4) (Geobacter uraniireducens).